The sequence spans 533 residues: Beta-1,4-mannosyl-glycoprotein 4-beta-N-acetylglucosaminyltransferase (533 aa).

At 1–7 the chain is on the cytoplasmic side; it reads MKMRRYK. The helical; Signal-anchor for type II membrane protein transmembrane segment at 8–23 threads the bilayer; that stretch reads LFLMFCMAGLCLISFL. Over 24 to 533 the chain is Lumenal; the sequence is HFFKTLSYVT…ARGKLDEAEV (510 aa). A disordered region spans residues 119–158; the sequence is KPGTKMLERPPPGRPEEKPEGANGSSARRPPRYLLSARER. Residues Asn-141, Asn-241, Asn-259, and Asn-397 are each glycosylated (N-linked (GlcNAc...) asparagine). Residues 507–533 are disordered; the sequence is STAAGGWRHRGPEGRPPARGKLDEAEV.

Belongs to the glycosyltransferase 17 family. In terms of assembly, interacts with MGAT4D.

It localises to the golgi apparatus membrane. The catalysed reaction is N(4)-{beta-D-GlcNAc-(1-&gt;2)-alpha-D-Man-(1-&gt;3)-[beta-D-GlcNAc-(1-&gt;2)-alpha-D-Man-(1-&gt;6)]-beta-D-Man-(1-&gt;4)-beta-D-GlcNAc-(1-&gt;4)-beta-D-GlcNAc}-L-asparaginyl-[protein] + UDP-N-acetyl-alpha-D-glucosamine = N(4)-{beta-D-GlcNAc-(1-&gt;2)-alpha-D-Man-(1-&gt;3)-[beta-D-GlcNAc-(1-&gt;4)]-[beta-D-GlcNAc-(1-&gt;2)-alpha-D-Man-(1-&gt;6)]-beta-D-Man-(1-&gt;4)-beta-D-GlcNAc-(1-&gt;4)-beta-D-GlcNAc}-L-asparaginyl-[protein] + UDP + H(+). The protein operates within protein modification; protein glycosylation. Functionally, it is involved in the regulation of the biosynthesis and biological function of glycoprotein oligosaccharides. Catalyzes the addition of N-acetylglucosamine in beta 1-4 linkage to the beta-linked mannose of the trimannosyl core of N-linked sugar chains, called bisecting N-acetylglucosamine (GlcNAc). It is one of the most important enzymes involved in the regulation of the biosynthesis of glycoprotein oligosaccharides. The addition of this bisecting GlcNAc residue alters not only the composition, but also the conformation of the N-glycan. The introduction of the bisecting GlcNAc residue results in the suppression of further processing and elongation of N-glycans, precluding the formation of beta-1,6 GlcNAc branching, catalyzed by MGAT5 since it is unable to use the bisected oligosaccharide as a substrate. Addition of bisecting N-acetylglucosamine to CDH1/E-cadherin modulates CDH1 cell membrane location. Inhibits NeuAc-alpha-2,3-Gal-beta-1,4-GlcNAc- formation which modulates sialylation levels and plays a role in cell migration regulation. In brain, addition of bisecting N-acetylglucosamine to BACE1 blocks its lysosomal targeting in response to oxidative stress and further degradation which increases its location to early endosome and the APP cleavage. The protein is Beta-1,4-mannosyl-glycoprotein 4-beta-N-acetylglucosaminyltransferase of Homo sapiens (Human).